A 150-amino-acid chain; its full sequence is Protein-export protein SecB (150 aa).

The protein belongs to the SecB family. As to quaternary structure, homotetramer, a dimer of dimers. One homotetramer interacts with 1 SecA dimer.

It localises to the cytoplasm. Functionally, one of the proteins required for the normal export of preproteins out of the cell cytoplasm. It is a molecular chaperone that binds to a subset of precursor proteins, maintaining them in a translocation-competent state. It also specifically binds to its receptor SecA. The sequence is that of Protein-export protein SecB from Psychrobacter cryohalolentis (strain ATCC BAA-1226 / DSM 17306 / VKM B-2378 / K5).